The following is a 259-amino-acid chain: UPF0246 protein PSHAa2558 (259 aa).

It belongs to the UPF0246 family.

The polypeptide is UPF0246 protein PSHAa2558 (Pseudoalteromonas translucida (strain TAC 125)).